We begin with the raw amino-acid sequence, 292 residues long: Recombination-promoting nuclease RpnA (292 aa).

The protein belongs to the Rpn/YhgA-like nuclease family. Mg(2+) serves as cofactor.

With respect to regulation, inhibited by EDTA, Zn(2+) and by Mg(2+) plus Mn(2+); stimulated by Ca(2+) in the presence of Mg(2+). Its function is as follows. A low activity DNA endonuclease yielding 3'-hydroxyl ends, equally active on ss or dsDNA, not active on dsRNA. Shows no sequence specificity. Upon expression enhances RecA-independent DNA recombination 49-fold, concomitantly reducing viability by 88% and probably inducing DNA damage as measured by induction of the SOS repair response in RecA cells. RecA-independent DNA recombination leads to replacement of recipient genes with large segments of donor DNA rather than DNA addition to the donor strain; increased expression of RpnA leads to smaller replacement segments, suggesting this protein may play a role in generating crossover events. The chain is Recombination-promoting nuclease RpnA from Escherichia coli (strain K12).